Reading from the N-terminus, the 130-residue chain is Small ribosomal subunit protein uS9 (130 aa).

The protein belongs to the universal ribosomal protein uS9 family.

The sequence is that of Small ribosomal subunit protein uS9 from Exiguobacterium sp. (strain ATCC BAA-1283 / AT1b).